The following is a 196-amino-acid chain: GTP cyclohydrolase-2 (196 aa).

GTP is bound at residue 49-53; the sequence is RVHSE. The Zn(2+) site is built by cysteine 54, cysteine 65, and cysteine 67. Residues glutamine 70, 92-94, and threonine 114 each bind GTP; that span reads EGR. Aspartate 126 acts as the Proton acceptor in catalysis. The active-site Nucleophile is arginine 128. GTP is bound by residues threonine 149 and lysine 154.

This sequence belongs to the GTP cyclohydrolase II family. In terms of assembly, homodimer. Requires Zn(2+) as cofactor.

It catalyses the reaction GTP + 4 H2O = 2,5-diamino-6-hydroxy-4-(5-phosphoribosylamino)-pyrimidine + formate + 2 phosphate + 3 H(+). Its pathway is cofactor biosynthesis; riboflavin biosynthesis; 5-amino-6-(D-ribitylamino)uracil from GTP: step 1/4. Its function is as follows. Catalyzes the conversion of GTP to 2,5-diamino-6-ribosylamino-4(3H)-pyrimidinone 5'-phosphate (DARP), formate and pyrophosphate. The polypeptide is GTP cyclohydrolase-2 (Escherichia coli O127:H6 (strain E2348/69 / EPEC)).